We begin with the raw amino-acid sequence, 425 residues long: Histidine--tRNA ligase 1 (425 aa).

The protein belongs to the class-II aminoacyl-tRNA synthetase family. In terms of assembly, homodimer.

The protein localises to the cytoplasm. The catalysed reaction is tRNA(His) + L-histidine + ATP = L-histidyl-tRNA(His) + AMP + diphosphate + H(+). This is Histidine--tRNA ligase 1 from Bacillus thuringiensis subsp. konkukian (strain 97-27).